The primary structure comprises 881 residues: MDAAGASCSSSEAVARELLLAALQDLSQEQLKRFRHKLRDAPLDGRSIPWGRLEHSDAVDLTDKLIEFYAPEPAVDVTRKILKKADIRDVSLRLKEQQLQRLGSSSALLTVSEYKKKYREHVLRQHAKVKERNARSVKINKRFTKLLIAPGSGAGEDELLGTSGEPEPERARRSDTHTFNRLFRGNDDEGPRPLTVVLQGPAGIGKTMAAKKILYDWAGGKLYHSQVDFAFFMPCGELLERPGTRSLADLILEQCPDRTAPVRRILAQPHRLLFILDGADELPTLAAPEATPCRDPFEATSGLRVLSGLLSQELLPSARLLVTSRNATLGRLQGRLCSPQCAEVRGFSDKDKKKYFFKFFRDERKAERAYRFVKENETLYALCFVPFVCWIVCTVLLQQMELGRDLSRTSKTTTSVYLLFITSMLKSAGTNGPRVQGELRMLCRLAREGILKHQAQFSEKDLERLKLQGSQVQTMFLSKKELPGVLETVVTYQFIDQSFQEFLAALSYLLDAEGAPGNSAGSVQMLVNSDAGLRGHLALTTRFLFGLLSTERIRDIGNHFGCVVPGRVKQDTLRWVQGQSQPKVATVGAEKKDELKDEEAEEEEEEEEEEEEELNFGLELLYCLYETQEDDFVRQALSSLPEMVLERVRLTRMDLEVLSYCVQCCPDGQALRLVSCGLVAAKEKKKKKKSFMNRLKGSQSTGKQPPASLLRPLCEAMITQQCGLSILTLSHCKLPDAVCRDLSEALKVAPSLRELGLLQNRLTEAGLRLLSQGLAWPKCKVQTLRIQMPGLQEVIHYLVIVLQQSPVLTTLDLSGCQLPGTVVEPLCSALKHPKCGLKTLSLTSVELTENPLRELQAVKTLKPDLAIIHSKLGTHPQPLKG.

One can recognise a Pyrin domain in the interval 1–129; that stretch reads MDAAGASCSS…EHVLRQHAKV (129 aa). S104 carries the phosphoserine modification. The interval 154–175 is disordered; it reads AGEDELLGTSGEPEPERARRSD. Positions 194 to 510 constitute an NACHT domain; it reads LTVVLQGPAG…EFLAALSYLL (317 aa). 200–207 contributes to the ATP binding site; sequence GPAGIGKT. One copy of the LRR 1 repeat lies at 459–484; it reads EKDLERLKLQGSQVQTMFLSKKELPG. The tract at residues 579-611 is disordered; that stretch reads QSQPKVATVGAEKKDELKDEEAEEEEEEEEEEE. The span at 596–611 shows a compositional bias: acidic residues; sequence KDEEAEEEEEEEEEEE. LRR repeat units follow at residues 637 to 660, 749 to 772, and 839 to 863; these read LSSLPEMVLERVRLTRMDLEVLSY, APSLRELGLLQNRLTEAGLRLLSQ, and TLSLTSVELTENPLRELQAVKTLKP.

It belongs to the NLRP family. As to quaternary structure, homomultimer; forms the NLRP6 inflammasome polymeric complex, a filament composed of homopolymers in response to pathogens and other damage-associated signals. The core of NLRP6 inflammasomes consists of a signal sensor component (NLRP6), an adapter (PYCARD/ASC), which recruits effector pro-inflammatory caspases (CASP1 and CASP4). Interacts (via pyrin domain) with PYCARD/ASC (via pyrin domain); interaction takes place following NLRP6 activation and formation of liquid-liquid phase separation (LLPS), initiating nucleation which greatly enhances further addition of soluble PYCARD/ASC molecules to the speck in a prion-like polymerization process. Clustered PYCARD/ASC nucleates the formation of CASP1 (or possibly CASP4) filaments through the interaction of their respective CARD domains, acting as a platform for CASP1 polymerization. CASP1 filament formation increases local enzyme concentration, resulting in trans-autocleavage and activation. Active CASP1 then processes IL1B and IL18 precursors, leading to the release of mature cytokines in the extracellular milieu and inflammatory response. Interacts with DHX15. Polyubiquitinated with 'Lys-63'-linked chains, promoting the interaction with PYCARD/ASC and formation of the NLRP6 inflammasome. Deubiquitination by CYLD decreases the interaction with PYCARD/ASC. As to expression, detected in several tissues. Expressed in renal epithelial cells in medullary thick ascending limb of Henle, as well as in salivary gland apical epithelium (at protein level). Isoform 1 is widely expressed. Isoform 2 is primarily expressed in kidney (at protein level).

The protein resides in the cytoplasm. It localises to the inflammasome. Its subcellular location is the cell membrane. The protein localises to the nucleus membrane. Functionally, acts as the sensor component of the NLRP6 inflammasome, which mediates inflammasome activation in response to various pathogen-associated signals, leading to maturation and secretion of IL1B and IL18. Inflammasomes are supramolecular complexes that assemble in the cytosol in response to pathogens and other damage-associated signals and play critical roles in innate immunity and inflammation. Acts as a recognition receptor (PRR): recognizes and binds specific pathogens and other damage-associated signals, such as lipoteichoic acid (LTA), a cell-wall component of Gram-positive bacteria, or double stranded RNA (dsRNA). May also recognize and bind lipopolysaccharide (LPS), a major component of the outer membrane of Gram-negative bacteria; however, LPS is probably not a major activator of the NLRP6 inflammasome. Following LTA- or dsRNA-binding, NLRP6 undergoes liquid-liquid phase separation (LLPS), enhancing multivalent interactions, an essential step for the formation of the NLRP6 inflammasome polymeric complex. The NLRP6 inflammasome acts by promoting recruitment of effector pro-inflammatory caspases (CASP1 and/or CASP4) that catalyze maturation and secretion of IL1B and IL18 in the extracellular milieu. The NLRP6 inflammasome plays a central role in the maintenance of epithelial integrity and host defense against microbial infections in the intestine. Required to restrict infection against Gram-positive bacteria by recognizing lipoteichoic acid (LTA), leading to recruitment of CASP4 and CASP1, and subsequent maturation and secretion of IL1B and IL18. Involved in intestinal antiviral innate immunity together with DHX15: recognizes and binds viral dsRNA to restrict infection by enteric viruses through the interferon pathway and GSDMD-dependent release of IL18. Required to prevent infection by the apicomplexan parasite Cryptosporidium in enterocytes by promoting GSDMD-dependent release of IL18. The NLRP6 inflammasome may also regulate the gut microbiota composition by acting as a sensor of microbiota-associated metabolites to form a PYCARD/ASC-dependent inflammasome for downstream IL18 release and secretion of antimicrobial peptides. Essential for gut mucosal self-renewal and proliferation. Regulate mucus secretion in an inflammasome- and autophagy-dependent manner to prevent invasion by enteric bacteria,. During systemic bacterial infections, the NLRP6 inflammasome negatively regulates neutrophil recruitment and neutrophil extracellular traps (NETs) formation. May promote peripheral nerve recovery following injury via an inflammasome-independent mechanism. The sequence is that of NACHT, LRR and PYD domains-containing protein 6 from Rattus norvegicus (Rat).